A 223-amino-acid chain; its full sequence is UPF0441 protein YgiB (223 aa).

Positions 178–195 are enriched in low complexity; that stretch reads TVPKTAMAPKPATTTTVT. Residues 178 to 223 are disordered; it reads TVPKTAMAPKPATTTTVTRGGFGESVAKQSTMQRSAAGTSTRSMGG. The span at 204 to 223 shows a compositional bias: polar residues; the sequence is AKQSTMQRSAAGTSTRSMGG.

Belongs to the UPF0441 family.

The sequence is that of UPF0441 protein YgiB from Salmonella paratyphi B (strain ATCC BAA-1250 / SPB7).